The sequence spans 95 residues: FXYD domain-containing ion transport regulator 6 (95 aa).

Positions 1-18 are cleaved as a signal peptide; sequence MELVLVFLCSLLAPMVLA. The Extracellular segment spans residues 19-35; the sequence is STAEKEKEMDPFHYDYQ. Residues 36 to 58 form a helical membrane-spanning segment; the sequence is TLRIGGLVFAVVLFSVGILLILS. Residues 59-95 lie on the Cytoplasmic side of the membrane; that stretch reads RRCKCSFNQKPRAPGDEEAQVENLITANATEPQKAEN.

The protein belongs to the FXYD family. In terms of assembly, regulatory subunit of the sodium/potassium-transporting ATPase which is composed of a catalytic alpha subunit, a non-catalytic beta subunit and an additional regulatory subunit. The regulatory subunit, a member of the FXYD protein family, modulates the enzymatic activity in a tissue- and isoform-specific way by changing affinities of the Na+/K+-ATPase toward Na(+), K(+) or ATP.

Its subcellular location is the cell membrane. Associates with and regulates the activity of the sodium/potassium-transporting ATPase (NKA) which catalyzes the hydrolysis of ATP coupled with the exchange of Na(+) and K(+) ions across the plasma membrane. Reduces the apparent affinity for intracellular Na(+) with no change in the apparent affinity for extracellular K(+). In addition to modulating NKA kinetics, may also function as a regulator of NKA localization to the plasma membrane. This chain is FXYD domain-containing ion transport regulator 6 (FXYD6), found in Macaca fascicularis (Crab-eating macaque).